The sequence spans 328 residues: MTVQTERPPSGPSDVRKADGGGTGGTRARAASRAGALAPYLLLLPAAAATVLLLGWPLVKDGLLSFQNLNMAQLIQHVTEWTGFDNYKEVLTGEDFWRVTVRSIIFTAVNVVLTMVVGGLIGLLLARLGRVMRFVLMIGLVLAWAMPVVAATTVYQWLFAQRFGVVNWVLDKLGWHSMADFSWTGSQFSTFFVVTVLIVWMSVPFVAINLYAATTTIPDELYEAAALDGAGMWRSFTSVTLPFLRPFLYATTFLEVIWIFKAFVQVYTFNGGGPDRLTEILPVYAYIEGVGNQHYGMGAAIAVLTILILLGLTAYYLRIVLKQEEDEL.

Residues M1 to R27 form a disordered region. Helical transmembrane passes span A36–W56, I104–L124, F134–V154, F188–I208, F247–Y267, and M297–L317. One can recognise an ABC transmembrane type-1 domain in the interval T100–Y316.

Belongs to the binding-protein-dependent transport system permease family. As to quaternary structure, the complex is composed of two ATP-binding proteins (MsiK), two transmembrane proteins (DasB and DasC) and a solute-binding protein (DasA).

It localises to the cell membrane. In terms of biological role, part of the ABC transporter complex DasABC-MsiK involved in N,N'-diacetylchitobiose ((GlcNAc)2) uptake. Responsible for the translocation of the substrate across the membrane. The polypeptide is Diacetylchitobiose uptake system permease protein DasB (Streptomyces coelicolor (strain ATCC BAA-471 / A3(2) / M145)).